The chain runs to 372 residues: Tyrosine--tRNA ligase (372 aa).

Residues Y37, Y169, Q173, D176, and Q191 each contribute to the L-tyrosine site. The short motif at 246–250 (KMSKS) is the 'KMSKS' region element. Position 249 (K249) interacts with ATP.

It belongs to the class-I aminoacyl-tRNA synthetase family. TyrS type 4 subfamily. As to quaternary structure, homodimer.

Its subcellular location is the cytoplasm. The enzyme catalyses tRNA(Tyr) + L-tyrosine + ATP = L-tyrosyl-tRNA(Tyr) + AMP + diphosphate + H(+). Functionally, catalyzes the attachment of tyrosine to tRNA(Tyr) in a two-step reaction: tyrosine is first activated by ATP to form Tyr-AMP and then transferred to the acceptor end of tRNA(Tyr). In Pyrobaculum arsenaticum (strain DSM 13514 / JCM 11321 / PZ6), this protein is Tyrosine--tRNA ligase.